Here is a 401-residue protein sequence, read N- to C-terminus: Nicotinate phosphoribosyltransferase (401 aa).

His-221 carries the post-translational modification Phosphohistidine; by autocatalysis.

Belongs to the NAPRTase family. Transiently phosphorylated on a His residue during the reaction cycle. Phosphorylation strongly increases the affinity for substrates and increases the rate of nicotinate D-ribonucleotide production. Dephosphorylation regenerates the low-affinity form of the enzyme, leading to product release.

The enzyme catalyses nicotinate + 5-phospho-alpha-D-ribose 1-diphosphate + ATP + H2O = nicotinate beta-D-ribonucleotide + ADP + phosphate + diphosphate. It functions in the pathway cofactor biosynthesis; NAD(+) biosynthesis; nicotinate D-ribonucleotide from nicotinate: step 1/1. Functionally, catalyzes the synthesis of beta-nicotinate D-ribonucleotide from nicotinate and 5-phospho-D-ribose 1-phosphate at the expense of ATP. This chain is Nicotinate phosphoribosyltransferase, found in Edwardsiella ictaluri (strain 93-146).